The primary structure comprises 672 residues: Serine/threonine-protein kinase ppk16 (672 aa).

One can recognise a Protein kinase domain in the interval tyrosine 31–phenylalanine 279. Residues valine 37–valine 45 and lysine 60 each bind ATP. The active-site Proton acceptor is the aspartate 148. Serine 231 is subject to Phosphoserine. Residues valine 375–serine 384 show a composition bias toward polar residues. Disordered stretches follow at residues valine 375–asparagine 396, aspartate 416–leucine 436, asparagine 464–valine 572, and serine 632–leucine 672. The span at asparagine 472–proline 487 shows a compositional bias: polar residues. Low complexity predominate over residues serine 508 to asparagine 523. A compositionally biased stretch (polar residues) spans leucine 531–threonine 541. Composition is skewed to low complexity over residues arginine 549–valine 572 and serine 639–serine 649.

Belongs to the protein kinase superfamily. Ser/Thr protein kinase family.

Its subcellular location is the cytoplasm. The catalysed reaction is L-seryl-[protein] + ATP = O-phospho-L-seryl-[protein] + ADP + H(+). It carries out the reaction L-threonyl-[protein] + ATP = O-phospho-L-threonyl-[protein] + ADP + H(+). Functionally, has a role in meiosis. The polypeptide is Serine/threonine-protein kinase ppk16 (ppk16) (Schizosaccharomyces pombe (strain 972 / ATCC 24843) (Fission yeast)).